Here is a 303-residue protein sequence, read N- to C-terminus: Ferrochelatase (303 aa).

Fe cation-binding residues include histidine 185 and glutamate 262.

The protein belongs to the ferrochelatase family.

The protein resides in the cytoplasm. The catalysed reaction is heme b + 2 H(+) = protoporphyrin IX + Fe(2+). Its pathway is porphyrin-containing compound metabolism; protoheme biosynthesis; protoheme from protoporphyrin-IX: step 1/1. Its function is as follows. Catalyzes the ferrous insertion into protoporphyrin IX. The polypeptide is Ferrochelatase (Campylobacter jejuni subsp. doylei (strain ATCC BAA-1458 / RM4099 / 269.97)).